Consider the following 117-residue polypeptide: Large ribosomal subunit protein uL22 (117 aa).

The protein belongs to the universal ribosomal protein uL22 family. In terms of assembly, part of the 50S ribosomal subunit.

Functionally, this protein binds specifically to 23S rRNA; its binding is stimulated by other ribosomal proteins, e.g. L4, L17, and L20. It is important during the early stages of 50S assembly. It makes multiple contacts with different domains of the 23S rRNA in the assembled 50S subunit and ribosome. In terms of biological role, the globular domain of the protein is located near the polypeptide exit tunnel on the outside of the subunit, while an extended beta-hairpin is found that lines the wall of the exit tunnel in the center of the 70S ribosome. The polypeptide is Large ribosomal subunit protein uL22 (Staphylococcus epidermidis (strain ATCC 35984 / DSM 28319 / BCRC 17069 / CCUG 31568 / BM 3577 / RP62A)).